A 107-amino-acid chain; its full sequence is MMKVLVVVALLVTLISYSSSEGIDDLEADELLSLMANEQTRKECIPKHHECTSNKHGCCRGNFFKYKCQCTTVVTQDGEQTERCFCGTPPHHKAAELVVGFGKKFFG.

A signal peptide spans 1 to 20 (MMKVLVVVALLVTLISYSSS). Residues 21-41 (EGIDDLEADELLSLMANEQTR) constitute a propeptide that is removed on maturation. Cystine bridges form between Cys44–Cys59, Cys51–Cys68, Cys58–Cys86, and Cys70–Cys84.

Belongs to the neurotoxin 19 (CSTX) family. 04 (U1-Lctx) subfamily. As to expression, expressed by the venom gland.

It is found in the secreted. The protein is U1-lycotoxin-Ls1f of Lycosa singoriensis (Wolf spider).